Here is a 272-residue protein sequence, read N- to C-terminus: Ribosomal RNA small subunit methyltransferase A (272 aa).

S-adenosyl-L-methionine contacts are provided by His11, Leu13, Gly38, Glu59, Asp84, and Asn109.

It belongs to the class I-like SAM-binding methyltransferase superfamily. rRNA adenine N(6)-methyltransferase family. RsmA subfamily.

It is found in the cytoplasm. The catalysed reaction is adenosine(1518)/adenosine(1519) in 16S rRNA + 4 S-adenosyl-L-methionine = N(6)-dimethyladenosine(1518)/N(6)-dimethyladenosine(1519) in 16S rRNA + 4 S-adenosyl-L-homocysteine + 4 H(+). Functionally, specifically dimethylates two adjacent adenosines (A1518 and A1519) in the loop of a conserved hairpin near the 3'-end of 16S rRNA in the 30S particle. May play a critical role in biogenesis of 30S subunits. The protein is Ribosomal RNA small subunit methyltransferase A of Rippkaea orientalis (strain PCC 8801 / RF-1) (Cyanothece sp. (strain PCC 8801)).